The sequence spans 174 residues: Secretion monitor (174 aa).

Residues 1 to 35 (MGILNLWRQFGRRYFWSHLLLGVVAASIGAPTILA) form the signal peptide.

This sequence belongs to the SecM family.

It localises to the cytoplasm. The protein resides in the cytosol. It is found in the periplasm. Functionally, regulates secA expression by translational coupling of the secM secA operon. Translational pausing at a specific Pro residue 5 residues before the end of the protein may allow disruption of a mRNA repressor helix that normally suppresses secA translation initiation. The chain is Secretion monitor from Photorhabdus laumondii subsp. laumondii (strain DSM 15139 / CIP 105565 / TT01) (Photorhabdus luminescens subsp. laumondii).